The chain runs to 247 residues: MLLLPLPLLLFFLCSRAEAGEIIGGTECKPHSRPYMAYLEIVTSNGPSKSCGGFLIRRNFVLTAVHCAGRSITVTLGAHNITEKEDTWQKLEVIKQFRHPKYNTSTLHHDIMLLKLKEKASLTLAVGTLPFPSQFNFVPPGRMCRVAGWGRTGVLKPGSDTLQEVKLRLMDPQACSHFRYFDHNLQLCVGNPRKTKSAFKGDSGGPLLCAGVAQGIVSYGRLDAKPPAVFTRISHYRPWINKILQAN.

The first 19 residues, 1–19 (MLLLPLPLLLFFLCSRAEA), serve as a signal peptide directing secretion. The propeptide at 20 to 21 (GE) is activation peptide. Residues 22–245 (IIGGTECKPH…YRPWINKILQ (224 aa)) enclose the Peptidase S1 domain. Cys51 and Cys67 are joined by a disulfide. The Charge relay system role is filled by His66. Residues Asn80 and Asn103 are each glycosylated (N-linked (GlcNAc...) asparagine). Asp110 (charge relay system) is an active-site residue. Disulfide bonds link Cys144–Cys209 and Cys175–Cys188. Ser203 serves as the catalytic Charge relay system.

The protein belongs to the peptidase S1 family. Granzyme subfamily.

Its subcellular location is the secreted. The protein resides in the cytoplasmic granule. The catalysed reaction is Preferential cleavage: Phe-|-Xaa &gt; Tyr-|-Xaa &gt; Trp-|-Xaa &gt; Leu-|-Xaa.. Functionally, major secreted protease of mast cells with suspected roles in vasoactive peptide generation, extracellular matrix degradation, and regulation of gland secretion. This is Chymase (CMA1) from Macaca fascicularis (Crab-eating macaque).